We begin with the raw amino-acid sequence, 355 residues long: Beta-1,2-mannobiose phosphorylase (355 aa).

Residues N31, R46, R89, 140-141, K188, Y273, and D333 each bind beta-D-Manp-(1-&gt;2)-beta-D-Manp-(1-&gt;2)-D-Manp; that span reads ED.

This sequence belongs to the glycosyl hydrolase 130 family. In terms of assembly, homodimer.

It catalyses the reaction beta-D-mannopyranosyl-(1-&gt;2)-D-mannopyranose + phosphate = alpha-D-mannose 1-phosphate + D-mannose. Functionally, catalyzes the reversible phosphorolysis of 1,2-beta-oligomannan. In phosphorolytic reactions, prefers beta-1,2-mannobiose (beta-1,2-Man2) as substrate, but can also use beta-1,2-mannotriose. The polypeptide is Beta-1,2-mannobiose phosphorylase (Listeria innocua serovar 6a (strain ATCC BAA-680 / CLIP 11262)).